The sequence spans 289 residues: Mas-related G-protein coupled receptor member G (289 aa).

The Extracellular portion of the chain corresponds to 1-13 (MFGLFGLWRTFDS). The helical transmembrane segment at 14-34 (VVFYLTLIVGLGGPVGNGLVL) threads the bilayer. Topologically, residues 35–42 (WNLGFRIK) are cytoplasmic. The helical transmembrane segment at 43 to 63 (KGPFSIYLLHLAAADFLFLSC) threads the bilayer. The Extracellular portion of the chain corresponds to 64 to 78 (RVGFSVAQAALGAQD). The chain crosses the membrane as a helical span at residues 79–99 (TLYFVLTFLWFAVGLWLLAAF). At 100–120 (SVERCLSDLFPACYQGCRPRH) the chain is on the cytoplasmic side. Residues 121-141 (ASAVLCALVWTPTLPAVPLPA) traverse the membrane as a helical segment. Residues 142–163 (NACGLLRNSACPLVCPRYHVAS) are Extracellular-facing. The chain crosses the membrane as a helical span at residues 164-184 (VTWFLVLARVAWTAGVVLFVW). Residues 185 to 195 (VTCCSTRPRPR) lie on the Cytoplasmic side of the membrane. The chain crosses the membrane as a helical span at residues 196-216 (LYGIVLGALLLLFFCGLPSVF). Topologically, residues 217–221 (YWSLQ) are extracellular. The helical transmembrane segment at 222 to 242 (PLLNFLLPVFSPLATLLACVN) threads the bilayer. The Cytoplasmic portion of the chain corresponds to 243 to 289 (SSSKPLIYSGLGRQPGKREPLRSVLRRALGEGAELGARGQSLPMGLL).

This sequence belongs to the G-protein coupled receptor 1 family. Mas subfamily.

It is found in the cell membrane. In terms of biological role, orphan receptor. May regulate nociceptor function and/or development, including the sensation or modulation of pain. This Homo sapiens (Human) protein is Mas-related G-protein coupled receptor member G (MRGPRG).